We begin with the raw amino-acid sequence, 538 residues long: MNNPLLSISNPVKFFKPPIPYRISLNTTINKKQKHQSKTLVVKSNKRSTTSLTSSVSLVRRRNNNGDGETTLVKKVGRDEKGQTVLLCALGYWVQGLRCFSWLALNFHMAHCLNLKPSTLQLVQYTASLPMVAKPLYGVLSDVLYIGGARRVPYISVGVLLQGLAWGSLAIFPGAREVLPSLMAFILLSNLGASITEVSQDALVAEYGLRYQINGLQSYALMASAVGGILGNLLGGYCLLKTPPRILFLAFTALLSLQLIVSLSSKEESVNLPRIGEVTPEISSVLGIVKKQFLDLKGIVQVDEISQPLIWIVSSIALVPLLSGSVFCYQTQVLNLDPSVIGMSKVIGQLMLLCLTVVYDRYWKKLPMRALIHIVQLLYAFSLLFDYILVKQINLAFGISNTAFVLCFSSVAEILAQFKILPFSVLLANMCPGGCEGSITSFLASTLCLSSVVSGFTGVGMANMIGITSKNYSNLPAGILIQSLAALVPLWFIHYVPMLEPGFEREGKRAMSKKSRRNRRVGRVIGQESFAYRRERET.

The transit peptide at 1–57 (MNNPLLSISNPVKFFKPPIPYRISLNTTINKKQKHQSKTLVVKSNKRSTTSLTSSVS) directs the protein to the chloroplast. 12 helical membrane passes run 85–105 (VLLCALGYWVQGLRCFSWLAL), 129–149 (LPMVAKPLYGVLSDVLYIGGA), 152–172 (VPYISVGVLLQGLAWGSLAIF), 178–198 (VLPSLMAFILLSNLGASITEV), 220–240 (ALMASAVGGILGNLLGGYCLL), 246–266 (ILFLAFTALLSLQLIVSLSSK), 309–329 (LIWIVSSIALVPLLSGSVFCY), 339–359 (SVIGMSKVIGQLMLLCLTVVY), 370–390 (ALIHIVQLLYAFSLLFDYILV), 395–415 (LAFGISNTAFVLCFSSVAEIL), 447–467 (LCLSSVVSGFTGVGMANMIGI), and 479–499 (ILIQSLAALVPLWFIHYVPML).

This sequence belongs to the major facilitator superfamily. Folate-biopterin transporter (TC 2.A.71) family.

The protein localises to the plastid. It localises to the chloroplast membrane. Functionally, could mediate folate transport. In Arabidopsis thaliana (Mouse-ear cress), this protein is Probable folate-biopterin transporter 9, chloroplastic.